The chain runs to 178 residues: PEST proteolytic signal-containing nuclear protein (178 aa).

Basic and acidic residues predominate over residues 1-15 (MADGKAGDEKPEKSQ). The disordered stretch occupies residues 1–82 (MADGKAGDEK…FAIGSQTTKK (82 aa)). A2 carries the N-acetylalanine modification. Positions 37–47 (SSSNGGESSSR) are enriched in low complexity. S53 carries the phosphoserine modification. N6-acetyllysine is present on K64. Phosphoserine occurs at positions 77, 87, and 119. Positions 134-178 (NIGRDTPTSAGPNSFNKGKHGFSDNQKLWERNIKSHLGNVHDQDN) are disordered. Residue T139 is modified to Phosphothreonine. A compositionally biased stretch (polar residues) spans 139 to 149 (TPTSAGPNSFN). S147 carries the phosphoserine modification. 2 positions are modified to N6-acetyllysine: K150 and K152. Over residues 160-178 (KLWERNIKSHLGNVHDQDN) the composition is skewed to basic and acidic residues.

Interacts with UHRF2/NIRF. Ubiquitinated; mediated by UHRF2 and leading to its subsequent proteasomal degradation. In terms of processing, N-terminally acetylated in a HYPK-dependent manner by the NatA acetyltransferase complex which is composed of NAA10 and NAA15.

The protein resides in the nucleus. In terms of biological role, may be involved in cell cycle regulation. This Homo sapiens (Human) protein is PEST proteolytic signal-containing nuclear protein (PCNP).